Consider the following 650-residue polypeptide: MGNGVASFSGCCAGTTAGEISGRYVTGVGLVQENLGHSFCYVRPVLTGSKSSFPPEPPLRPDPIPGTTTTFRSISGASVSANTSTALSTSLSTDTSGIASAFESSNRFASLPLQPVPRSPIKKSDHGSGLFERRFLSGPIESGLVSGKKTKEKAKLKKSGSKSFTKPKLKKSESKIFTFKNVFTNLSCSKKSVIKPINGFDSFDGSSDTDRYIPEINSLSTIVSSHEKPRIKEEEDKTESALEEPKIQWAQGKAGEDRVHVILSEENGWLFVGIYDGFSGPDPPDYLIKNLYTAVLRELKGLLWIDKGESYNRNGESNIEKQSTVEHASDSDQENCPVMNGNDVACGSRNITSDVKKLQWRCEWEHNSSNKSNNINHKDVLRALQQALEKTEESFDLMVNENPELALMGSCVLVTLMKGEDVYVMSVGDSRAVLARRPNVEKMKMQKELERVKEESPLETLFITERGLSLLVPVQLNKEHSTSVEEEVRRIKKEHPDDILAIENNRVKGYLKVTRAFGAGFLKQPKWNEALLEMFRIDYVGTSPYITCSPSLHHHRLSSRDKFLILSSDGLYEYFSNEEAIFEVDSFISAFPEGDPAQHLIQEVLLRAAKKYGMDFHELLEIPQGDRRRYHDDVSVIVISLEGRIWRSSM.

The disordered stretch occupies residues 146 to 166 (SGKKTKEKAKLKKSGSKSFTK). Over residues 148–166 (KKTKEKAKLKKSGSKSFTK) the composition is skewed to basic residues. The PPM-type phosphatase domain occupies 239 to 641 (ESALEEPKIQ…DDVSVIVISL (403 aa)). Mn(2+) is bound by residues aspartate 276, glycine 277, aspartate 569, and aspartate 632.

This sequence belongs to the PP2C family. The cofactor is Mg(2+). It depends on Mn(2+) as a cofactor.

The protein resides in the nucleus. It catalyses the reaction O-phospho-L-seryl-[protein] + H2O = L-seryl-[protein] + phosphate. The catalysed reaction is O-phospho-L-threonyl-[protein] + H2O = L-threonyl-[protein] + phosphate. This is Probable protein phosphatase 2C 36 (PLL3) from Arabidopsis thaliana (Mouse-ear cress).